Reading from the N-terminus, the 101-residue chain is Small ribosomal subunit protein bS6 (101 aa).

This sequence belongs to the bacterial ribosomal protein bS6 family.

Binds together with bS18 to 16S ribosomal RNA. The chain is Small ribosomal subunit protein bS6 from Arthrobacter sp. (strain FB24).